The chain runs to 119 residues: Flagellar transcriptional regulator FlhD (119 aa).

Belongs to the FlhD family. As to quaternary structure, homodimer; disulfide-linked. Forms a heterohexamer composed of two FlhC and four FlhD subunits. Each FlhC binds a FlhD dimer, forming a heterotrimer, and a hexamer assembles by dimerization of two heterotrimers.

It is found in the cytoplasm. Its function is as follows. Functions in complex with FlhC as a master transcriptional regulator that regulates transcription of several flagellar and non-flagellar operons by binding to their promoter region. Activates expression of class 2 flagellar genes, including fliA, which is a flagellum-specific sigma factor that turns on the class 3 genes. Also regulates genes whose products function in a variety of physiological pathways. The polypeptide is Flagellar transcriptional regulator FlhD (Serratia marcescens).